Consider the following 262-residue polypeptide: Sulfur carrier protein FdhD (262 aa).

C107 serves as the catalytic Cysteine persulfide intermediate.

It belongs to the FdhD family.

The protein localises to the cytoplasm. Its function is as follows. Required for formate dehydrogenase (FDH) activity. Acts as a sulfur carrier protein that transfers sulfur from IscS to the molybdenum cofactor prior to its insertion into FDH. This Bacillus subtilis (strain 168) protein is Sulfur carrier protein FdhD.